A 391-amino-acid chain; its full sequence is 3-ketoacyl-CoA thiolase (391 aa).

Residue Cys-95 is the Acyl-thioester intermediate of the active site. Residues His-347 and Cys-377 each act as proton acceptor in the active site.

It belongs to the thiolase-like superfamily. Thiolase family. In terms of assembly, heterotetramer of two alpha chains (FadB) and two beta chains (FadA).

The protein localises to the cytoplasm. It carries out the reaction an acyl-CoA + acetyl-CoA = a 3-oxoacyl-CoA + CoA. The protein operates within lipid metabolism; fatty acid beta-oxidation. Functionally, catalyzes the final step of fatty acid oxidation in which acetyl-CoA is released and the CoA ester of a fatty acid two carbons shorter is formed. The polypeptide is 3-ketoacyl-CoA thiolase (Stutzerimonas stutzeri (strain A1501) (Pseudomonas stutzeri)).